Reading from the N-terminus, the 351-residue chain is Uroporphyrinogen decarboxylase (351 aa).

Substrate contacts are provided by residues 25-29, Asp74, Tyr151, Ser206, and His325; that span reads RQAGR.

This sequence belongs to the uroporphyrinogen decarboxylase family. In terms of assembly, homodimer.

The protein localises to the cytoplasm. It catalyses the reaction uroporphyrinogen III + 4 H(+) = coproporphyrinogen III + 4 CO2. Its pathway is porphyrin-containing compound metabolism; protoporphyrin-IX biosynthesis; coproporphyrinogen-III from 5-aminolevulinate: step 4/4. Catalyzes the decarboxylation of four acetate groups of uroporphyrinogen-III to yield coproporphyrinogen-III. This is Uroporphyrinogen decarboxylase from Prosthecochloris aestuarii (strain DSM 271 / SK 413).